The following is an 882-amino-acid chain: Probable LRR receptor-like serine/threonine-protein kinase At1g12460 (882 aa).

The signal sequence occupies residues 1 to 21 (MRKVHLFLVLVHFIYISTSRS). Residues 22 to 515 (DSISERDILL…SRNSDALSIS (494 aa)) are Extracellular-facing. Asn76 is a glycosylation site (N-linked (GlcNAc...) asparagine). 16 LRR repeats span residues 92-113 (FIRV…DYFK), 116-138 (TLWT…ISEL), 140-162 (SLRF…LFKF), 165-187 (KTKF…IVNC), 189-210 (NLVG…RICD), 213-235 (VLEY…IQKC), 237-258 (RLIL…AVLT), 261-283 (NITY…VDCS), 285-308 (SLEF…MGCK), 309-331 (SLKL…IGKM), 333-355 (SLSV…IGSL), 357-379 (FLQV…ISNC), 381-404 (VLLE…LNLT), 405-427 (NIKI…LGNL), 429-451 (KVQF…LGSL), and 453-475 (TLTH…PMIQ). Residue Asn121 is glycosylated (N-linked (GlcNAc...) asparagine). Asn261 and Asn266 each carry an N-linked (GlcNAc...) asparagine glycan. N-linked (GlcNAc...) asparagine glycosylation is found at Asn321 and Asn341. 3 N-linked (GlcNAc...) asparagine glycosylation sites follow: Asn402, Asn417, and Asn426. N-linked (GlcNAc...) asparagine glycosylation is found at Asn458 and Asn463. Residues 516–536 (VIIVIIAAAVILFGVCIVLAL) traverse the membrane as a helical segment. Residues 537–882 (NLRARKRRKD…LESIRNGFGS (346 aa)) lie on the Cytoplasmic side of the membrane. Position 589 is a phosphothreonine (Thr589). The Protein kinase domain occupies 593 to 876 (LDKENIIGMG…AEVVQVLESI (284 aa)). Residues 599–607 (IGMGSIGSV) and Lys621 each bind ATP. Phosphotyrosine is present on Tyr770.

The protein belongs to the protein kinase superfamily. Ser/Thr protein kinase family.

It localises to the cell membrane. The catalysed reaction is L-seryl-[protein] + ATP = O-phospho-L-seryl-[protein] + ADP + H(+). It carries out the reaction L-threonyl-[protein] + ATP = O-phospho-L-threonyl-[protein] + ADP + H(+). In Arabidopsis thaliana (Mouse-ear cress), this protein is Probable LRR receptor-like serine/threonine-protein kinase At1g12460.